The primary structure comprises 261 residues: Carbonic anhydrase 1 (261 aa).

Positions 1–40 (MASPDWGYDDKNGPEQWSKLYPIANGNNQSPVDIKTSETK) are disordered. Position 2 is an N-acetylalanine (Ala2). The region spanning 4–261 (PDWGYDDKNG…LKGRTVRASF (258 aa)) is the Alpha-carbonic anhydrase domain. His65 (proton donor/acceptor) is an active-site residue. Zn(2+) contacts are provided by His95, His97, and His120. Substrate contacts are provided by residues Thr200 and 200 to 201 (TH). The tract at residues 241–261 (PMQHNNRPTQPLKGRTVRASF) is disordered.

This sequence belongs to the alpha-carbonic anhydrase family. The cofactor is Zn(2+).

Its subcellular location is the cytoplasm. The catalysed reaction is hydrogencarbonate + H(+) = CO2 + H2O. It catalyses the reaction urea = cyanamide + H2O. Inhibited by acetazolamide. Catalyzes the reversible hydration of carbon dioxide. Can hydrate cyanamide to urea. This chain is Carbonic anhydrase 1 (CA1), found in Pan troglodytes (Chimpanzee).